Reading from the N-terminus, the 546-residue chain is Chaperonin GroEL (546 aa).

ATP contacts are provided by residues 30–33 (TLGP), K51, 87–91 (DGTTT), G415, 479–481 (NAA), and D495.

This sequence belongs to the chaperonin (HSP60) family. In terms of assembly, forms a cylinder of 14 subunits composed of two heptameric rings stacked back-to-back. Interacts with the co-chaperonin GroES.

It is found in the cytoplasm. It carries out the reaction ATP + H2O + a folded polypeptide = ADP + phosphate + an unfolded polypeptide.. In terms of biological role, together with its co-chaperonin GroES, plays an essential role in assisting protein folding. The GroEL-GroES system forms a nano-cage that allows encapsulation of the non-native substrate proteins and provides a physical environment optimized to promote and accelerate protein folding. This is Chaperonin GroEL from Xanthomonas axonopodis pv. citri (strain 306).